A 363-amino-acid polypeptide reads, in one-letter code: MTPVTPVPPQSPQQVKGLLSRFLTAPDRHPKLRYVYDIALIAISILCIVSIILWTQGSGLALFAIAPALAIGALGVTLLVSDLAESQKSKEIADTVAAVSLPFILTGTAAGLMFSAIAVGGGAVILANPLFLMGSMTLGFALMSLHRVTYQYLSNREQWKQQKKLEQVELAAWESHLPKESKSSALEEVRYSPRLMKRGKTWRKRAIRRKNYTPIPLVDKTLQTMQPDALFSSTTTHSTDSEQILTSVSPQSSDTESSSSSSFHTPPNSDKELSDSNSSDSSSSSEYMDALETVAAGDVSGITPPSKPSSSPKTTRRVVKLSRSERNAQHHRNKDQEQRQDSSESSEEDSSSDSSQKKKPSRK.

4 consecutive transmembrane segments (helical) span residues 34–54 (YVYDIALIAISILCIVSIILW), 60–80 (LALFAIAPALAIGALGVTLLV), 91–111 (EIADTVAAVSLPFILTGTAAG), and 112–132 (LMFSAIAVGGGAVILANPLFL). The span at 232-245 (SSTTTHSTDSEQIL) shows a compositional bias: polar residues. The disordered stretch occupies residues 232–363 (SSTTTHSTDS…SSQKKKPSRK (132 aa)). 2 stretches are compositionally biased toward low complexity: residues 246–268 (TSVSPQSSDTESSSSSSFHTPPN) and 275–285 (DSNSSDSSSSS). A compositionally biased stretch (basic and acidic residues) spans 322 to 342 (SRSERNAQHHRNKDQEQRQDS).

It belongs to the chlamydial CPn_0443/CT_005/TC_0273 family.

It localises to the cell membrane. This is an uncharacterized protein from Chlamydia trachomatis serovar D (strain ATCC VR-885 / DSM 19411 / UW-3/Cx).